A 425-amino-acid chain; its full sequence is Adenylosuccinate synthetase (425 aa).

GTP contacts are provided by residues 12-18 (GDEGKGK) and 40-42 (GHT). Asp13 serves as the catalytic Proton acceptor. Residues Asp13 and Gly40 each coordinate Mg(2+). IMP is bound by residues 13 to 16 (DEGK), 38 to 41 (NAGH), Thr129, Arg143, Asn221, Thr236, and Arg300. Catalysis depends on His41, which acts as the Proton donor. Residue 296 to 302 (VTTGRKR) participates in substrate binding. Residues Arg302, 328–330 (KLD), and 410–412 (GVG) contribute to the GTP site.

Belongs to the adenylosuccinate synthetase family. As to quaternary structure, homodimer. Requires Mg(2+) as cofactor.

Its subcellular location is the cytoplasm. It catalyses the reaction IMP + L-aspartate + GTP = N(6)-(1,2-dicarboxyethyl)-AMP + GDP + phosphate + 2 H(+). The protein operates within purine metabolism; AMP biosynthesis via de novo pathway; AMP from IMP: step 1/2. Plays an important role in the de novo pathway and in the salvage pathway of purine nucleotide biosynthesis. Catalyzes the first committed step in the biosynthesis of AMP from IMP. The protein is Adenylosuccinate synthetase of Phaeosphaeria nodorum (strain SN15 / ATCC MYA-4574 / FGSC 10173) (Glume blotch fungus).